The chain runs to 437 residues: UDP-N-acetylmuramate--L-alanine ligase (437 aa).

114 to 120 (GTHGKTS) serves as a coordination point for ATP.

Belongs to the MurCDEF family.

It localises to the cytoplasm. It carries out the reaction UDP-N-acetyl-alpha-D-muramate + L-alanine + ATP = UDP-N-acetyl-alpha-D-muramoyl-L-alanine + ADP + phosphate + H(+). Its pathway is cell wall biogenesis; peptidoglycan biosynthesis. Cell wall formation. The sequence is that of UDP-N-acetylmuramate--L-alanine ligase from Lactobacillus johnsonii (strain CNCM I-12250 / La1 / NCC 533).